Here is a 265-residue protein sequence, read N- to C-terminus: Histidine racemase (265 aa).

Residue C67 is the Proton acceptor of the active site. Residue C209 is the Proton donor of the active site.

This sequence belongs to the histidine racemase family. As to quaternary structure, homodimer.

The enzyme catalyses L-histidine = D-histidine. With respect to regulation, activity is not affected by buffer composition (PO(4) or Tris), ions (SO(4)(2-), Mg(2+) and EDTA) or the PLP inhibitor hydroxylamine. However, the activity is hindered by iodoacetamide and Hg(2+), which are known inhibitors of enzymes with catalytic thiols. Cofactor-independent isomerase that catalyzes the reversible conversion of L-histidine to D-histidine. Shows weak activity with L,L-lanthionine. The catalytic turnover is 10'000-fold faster with L-histidine than with L,L-lanthionine. May play a role in growth of F.nucleatum. This is Histidine racemase from Fusobacterium nucleatum subsp. nucleatum (strain ATCC 25586 / DSM 15643 / BCRC 10681 / CIP 101130 / JCM 8532 / KCTC 2640 / LMG 13131 / VPI 4355).